Consider the following 282-residue polypeptide: 2-dehydro-3-deoxyphosphooctonate aldolase (282 aa).

Belongs to the KdsA family.

The protein resides in the cytoplasm. The enzyme catalyses D-arabinose 5-phosphate + phosphoenolpyruvate + H2O = 3-deoxy-alpha-D-manno-2-octulosonate-8-phosphate + phosphate. It functions in the pathway carbohydrate biosynthesis; 3-deoxy-D-manno-octulosonate biosynthesis; 3-deoxy-D-manno-octulosonate from D-ribulose 5-phosphate: step 2/3. Its pathway is bacterial outer membrane biogenesis; lipopolysaccharide biosynthesis. The chain is 2-dehydro-3-deoxyphosphooctonate aldolase from Shewanella baltica (strain OS185).